Here is a 640-residue protein sequence, read N- to C-terminus: Chaperone protein DnaK (640 aa).

Residue Thr-196 is modified to Phosphothreonine; by autocatalysis. Disordered stretches follow at residues 510 to 530 and 598 to 640; these read NDAK…ETKN and AADA…DKDK.

It belongs to the heat shock protein 70 family.

In terms of biological role, acts as a chaperone. This chain is Chaperone protein DnaK, found in Prosthecochloris aestuarii (strain DSM 271 / SK 413).